A 98-amino-acid polypeptide reads, in one-letter code: NADH-ubiquinone oxidoreductase chain 4L (98 aa).

Helical transmembrane passes span 1 to 21, 26 to 46, and 61 to 81; these read MPLISTNILLAFITALLGVLI, LMSSLLCLEGMMLSMFILVSL, and LILLVFAACEAAVGLALLVMV.

Belongs to the complex I subunit 4L family. Core subunit of respiratory chain NADH dehydrogenase (Complex I) which is composed of 45 different subunits.

It is found in the mitochondrion inner membrane. The catalysed reaction is a ubiquinone + NADH + 5 H(+)(in) = a ubiquinol + NAD(+) + 4 H(+)(out). In terms of biological role, core subunit of the mitochondrial membrane respiratory chain NADH dehydrogenase (Complex I) which catalyzes electron transfer from NADH through the respiratory chain, using ubiquinone as an electron acceptor. Part of the enzyme membrane arm which is embedded in the lipid bilayer and involved in proton translocation. The protein is NADH-ubiquinone oxidoreductase chain 4L (MT-ND4L) of Nycticebus coucang (Slow loris).